Reading from the N-terminus, the 97-residue chain is MIELREKNGSAVFVVKAQPRSSKSRVCGLYNGGLKVNLKAAPVDDAANRECCELFSKLFRIPPSRVHILSGQSSRTKTVMVEGISSKAAALVLEPFG.

The protein belongs to the UPF0235 family.

The protein is UPF0235 protein Ppha_2415 of Pelodictyon phaeoclathratiforme (strain DSM 5477 / BU-1).